Here is a 243-residue protein sequence, read N- to C-terminus: Uridylate kinase (243 aa).

12-15 (KLSG) serves as a coordination point for ATP. Residues 20 to 25 (GPGGSG) are involved in allosteric activation by GTP. Residue G56 coordinates UMP. ATP contacts are provided by G57 and R61. UMP is bound by residues D76 and 137 to 144 (TGSPYFST). N165, Y171, and D174 together coordinate ATP.

Belongs to the UMP kinase family. In terms of assembly, homohexamer.

The protein localises to the cytoplasm. The catalysed reaction is UMP + ATP = UDP + ADP. Its pathway is pyrimidine metabolism; CTP biosynthesis via de novo pathway; UDP from UMP (UMPK route): step 1/1. Its activity is regulated as follows. Allosterically activated by GTP. Inhibited by UTP. Functionally, catalyzes the reversible phosphorylation of UMP to UDP. This chain is Uridylate kinase, found in Oenococcus oeni (strain ATCC BAA-331 / PSU-1).